The following is a 331-amino-acid chain: Junctional sarcoplasmic reticulum protein 1 (331 aa).

Disordered regions lie at residues 1–118 (MSMT…EELP) and 157–331 (RVPE…KGRD). Positions 3–76 (MTTRAWEELD…EKEPAARGTP (74 aa)) are mediates interaction with CACNA1S. Basic and acidic residues-rich tracts occupy residues 21–35 (LEDH…EDRA) and 61–71 (TRPKKMEKEPA). Composition is skewed to pro residues over residues 103-112 (PLQPPPPPPA) and 161-175 (PWVP…PSSP). Basic and acidic residues-rich tracts occupy residues 222 to 242 (AVRE…PRRE) and 250 to 302 (PRKE…EPRK). Positions 320–331 (SRQKLRAGKGRD) are enriched in basic residues.

As to quaternary structure, interacts with CACNA1S, CACNB1 and calsequestrin.

The protein resides in the sarcoplasmic reticulum membrane. It localises to the endoplasmic reticulum membrane. In terms of biological role, involved in skeletal muscle excitation/contraction coupling (EC), probably acting as a regulator of the voltage-sensitive calcium channel CACNA1S. EC is a physiological process whereby an electrical signal (depolarization of the plasma membrane) is converted into a chemical signal, a calcium gradient, by the opening of ryanodine receptor calcium release channels. May regulate CACNA1S membrane targeting and activity. The protein is Junctional sarcoplasmic reticulum protein 1 (JSRP1) of Homo sapiens (Human).